We begin with the raw amino-acid sequence, 245 residues long: Zinc finger CCCH domain-containing protein 54 (245 aa).

Residues Thr-92 to Phe-119 form a C3H1-type zinc finger. Residues Gly-175–Asp-204 are disordered.

As to quaternary structure, interacts with MARD1/FLZ9 and RD21A. As to expression, specifically expressed in embryo (at protein level).

The protein localises to the nucleus. Its function is as follows. Embryo-specific transcription factor required at the globular to heart stage transition in embryo development. This chain is Zinc finger CCCH domain-containing protein 54, found in Arabidopsis thaliana (Mouse-ear cress).